The chain runs to 242 residues: E3 ubiquitin-protein ligase ZNRF2 (242 aa).

Positions 1–141 (MGAKQSGPAA…VGGSPGGPRL (141 aa)) are disordered. Gly2 carries the N-myristoyl glycine lipid modification. Residues Ser19, Ser21, and Ser25 each carry the phosphoserine modification. Over residues 19-29 (SGSDLPSSSSG) the composition is skewed to low complexity. Residues 30–41 (GANGTAGGGGGA) are compositionally biased toward gly residues. The segment covering 59–97 (PSASGGAAAAAAAPAAPAAPRSRSLGGAVGSVASGARAA) has biased composition (low complexity). Residues Ser82, Ser89, Ser113, Ser116, and Ser135 each carry the phosphoserine modification. Residues 99–118 (SPFSIPNSSSGPYGSQDSVH) are compositionally biased toward polar residues. Ser145 bears the Phosphoserine; by MTOR mark. Ser151 and Ser193 each carry phosphoserine. The RING-type; atypical zinc-finger motif lies at 199 to 240 (CAICLEELQQGDTIARLPCLCIYHKGCIDEWFEVNRSCPEHP).

As to quaternary structure, interacts with UBE2N. Interacts with ZNRF1. Interacts (when phosphorylated) with YWHAE. In terms of processing, phosphorylated; leading to binding to YWHAE. Phosphorylated by MTOR at Ser-145 and dephosphorylated by PP6C. Ser-145 phosphorylation stimulates vesicle-to-cytosol translocation. As to expression, highly expressed in the brain, with higher expression during development than in adult. Expressed also in mammary glands, testis, colon and kidney.

It is found in the endosome membrane. The protein resides in the lysosome membrane. Its subcellular location is the presynaptic cell membrane. It localises to the cytoplasm. It catalyses the reaction S-ubiquitinyl-[E2 ubiquitin-conjugating enzyme]-L-cysteine + [acceptor protein]-L-lysine = [E2 ubiquitin-conjugating enzyme]-L-cysteine + N(6)-ubiquitinyl-[acceptor protein]-L-lysine.. It functions in the pathway protein modification; protein ubiquitination. E3 ubiquitin-protein ligase that plays a role in the establishment and maintenance of neuronal transmission and plasticity. Ubiquitinates the Na(+)/K(+) ATPase alpha-1 subunit/ATP1A1 and thereby influences its endocytosis and/or degradation. Acts also as a positive regulator of mTORC1 activation by amino acids, which functions upstream of the V-ATPase and of Rag-GTPases. In turn, phosphorylation by mTOR leads to its inhibition via targeting to the cytosol allowing a self-regulating feedback mechanism. This Homo sapiens (Human) protein is E3 ubiquitin-protein ligase ZNRF2 (ZNRF2).